The following is a 1073-amino-acid chain: MTKKNHALIPIPGPSVWPLLGNLFDIDTEHGLASVLEMGRSYGDIFQLVLGGNKLVFLQTHALFDEVCDESRFCKVVVSGLGNLRAGVNDGLFTAHDGEHNWGVAHRIIMPIFGPIKIRETLGGMKDVCQELSLKWARYGPDHRIDIAGDLTRLTLDTIAFCTMGYRFNSFYRNSDVHPFVKSMVGFLREADKSSMIPEYLNAFRWKARRSFLGDIASMREMSMMILNLRRGNPSDRDDLLNALLHGRDPKTGEGMSDESIINNLITFLVAGHETTSGALSFVFYYLLTNPESLKNAREEVDRVIGAGNITADHLSKLPYIDAVLREALRLNPTGPAITLGAREDTTLGGKYAVKKGEPVLCMFHNIHRDKKVYGEDADEWKPERMMDENFNKLPKNAWKPFGNGTRGCIGRAFAWQESQLVIASILQNFDLTLDNPDYKLEIVETLTIKPGNFYVRAKLRSGRTPRELCGFSNPISTNIQIKNGTIAPANDGQVGNSTPVTILYGSNSGTCEALAHRLARDAPSYGYSVTTVATLDSVIGILPRAKDELVVIITCSYDGLPADNAVRFCNWLKTLDEDALGGMPFAVFACGHHDWAKTFYKVPIMIDELLARAGAHRVAQMGKANSAVSDMFSDLENWEDEHLWSSSSAAGNETVDNVARTEVKQDITITNPRARALHHNAVECIVSETHKLSESGSALKYHVEIQLPANMKYAPGDHLSVLPINPRQNVRRALARFHLAGDSVLSVARIGHMGTLGQETLSAFDVFASYVELSQPATRRNIATLLSVTPEGEGRYELAELGGAAFESQIRDMRVSVLDLLERYKAIKLCVGAFIDMLPPLRVRTYSISSSALWKPSHASLTISVLAQPALSGQGSFLGVASNFLADLVPGDAVHFTIRPCKKQFHLPDDASAHPIIMVAAGSGIAPFRGFIQDRALQRRNGVQLQPAILFFGCRGSKQDDLYRQELDEFEAEGVVSVRRAFSGEETVSISESRMYVQDRMWADRAEVIQLWNLGAKIYVCGGINMADGVREIFNEIVGPTEVDGKRGAESLNKLSEETMSARYVAEIFSQT.

Cys409 contacts heme. In terms of domain architecture, Flavodoxin-like spans 501-644; that stretch reads VTILYGSNSG…DLENWEDEHL (144 aa). Residues 507–511 and 588–620 each bind FMN; these read SNSGT and VFAC…HRVA. Positions 680–909 constitute an FAD-binding FR-type domain; the sequence is HNAVECIVSE…RPCKKQFHLP (230 aa).

The protein in the N-terminal section; belongs to the cytochrome P450 family. Requires FAD as cofactor. FMN serves as cofactor. It depends on heme as a cofactor.

It catalyses the reaction 2 oxidized [cytochrome P450] + NADPH = 2 reduced [cytochrome P450] + NADP(+) + H(+). The enzyme catalyses an organic molecule + reduced [NADPH--hemoprotein reductase] + O2 = an alcohol + oxidized [NADPH--hemoprotein reductase] + H2O + H(+). The catalysed reaction is dodecanoate + reduced [NADPH--hemoprotein reductase] + O2 = 10-hydroxydodecanoate + oxidized [NADPH--hemoprotein reductase] + H2O + H(+). It carries out the reaction tetradecanoate + reduced [NADPH--hemoprotein reductase] + O2 = 12-hydroxytetradecanoate + oxidized [NADPH--hemoprotein reductase] + H2O + H(+). In terms of biological role, self-sufficient cytochrome P450 monooxygenase that catalyzes the regioselective in-chain hydroxylation of alkanes, fatty alcohols, and fatty acids, giving sub-terminal hydroxylation by acting preferentially on the omega-2 position. Prefers fatty acids as substrates, since it hydroxylates the small amounts of dodecanoic acid formed in the presence of an excess of 1-dodecanol. This Oidiodendron maius (strain Zn) protein is Self-sufficient cytochrome P450 monooxygenase CYP505AG1.